A 350-amino-acid polypeptide reads, in one-letter code: Melatonin receptor type 1A-A (350 aa).

Topologically, residues 1-29 (MFMNGSSLNSSALDPSEQALQRPPWVTTT) are extracellular. 2 N-linked (GlcNAc...) asparagine glycosylation sites follow: asparagine 4 and asparagine 9. The chain crosses the membrane as a helical span at residues 30 to 50 (LGCFLIFTIVVDILGNLLVIF). Residues 51–63 (SVYRNKKLQNAGN) lie on the Cytoplasmic side of the membrane. Residues 64–84 (IFVVSLAVADLVVAIYPYPLV) traverse the membrane as a helical segment. Residues 85 to 101 (LTSIFHRGWNLGYMHCQ) lie on the Extracellular side of the membrane. A disulfide bridge connects residues cysteine 100 and cysteine 177. A helical transmembrane segment spans residues 102-122 (ISGFLMGVSVIGSIFNITGIA). Topologically, residues 123–144 (INCYCYICHSLKYDKLYSDKNS) are cytoplasmic. A helical membrane pass occupies residues 145 to 165 (VCYVLLIWALTVLAIVPNLFV). Residues 166 to 187 (GSLQYDPRVYSCTFEQSASSAY) lie on the Extracellular side of the membrane. The chain crosses the membrane as a helical span at residues 188-208 (TIAVVFFHFILPIMIVTYCYL). At 209–240 (RIWVLVIQVRRRVKNDNRPKITPHDVRNFVTM) the chain is on the cytoplasmic side. A helical transmembrane segment spans residues 241–261 (FVVFVLFAVCWAPLNFIGLAV). The Extracellular portion of the chain corresponds to 262 to 267 (AISPER). The helical transmembrane segment at 268 to 288 (VVPLIPEWLFVASYFMAYFNS) threads the bilayer. Over 289 to 350 (CLNAIVYGVL…NNNQVKVDSV (62 aa)) the chain is Cytoplasmic.

This sequence belongs to the G-protein coupled receptor 1 family.

The protein localises to the cell membrane. Its function is as follows. High affinity receptor for melatonin. The activity of this receptor is mediated by pertussis toxin sensitive G proteins that inhibits adenylate cyclase activity. This chain is Melatonin receptor type 1A-A (mtnr1aa), found in Danio rerio (Zebrafish).